We begin with the raw amino-acid sequence, 228 residues long: Cytochrome c oxidase subunit 2 (228 aa).

Residues 1–26 (MSTWANLGLQDSASPLMEQLIFFHDH) are Mitochondrial intermembrane-facing. A helical membrane pass occupies residues 27–48 (ALLILVMITVLVGYLMFMLFFN). The Mitochondrial matrix portion of the chain corresponds to 49–62 (NYVNRFLLHGQLIE). Residues 63 to 82 (MIWTILPAIILLFIALPSLR) form a helical membrane-spanning segment. Over 83 to 228 (LLYLLDEINE…FIKWISSNNS (146 aa)) the chain is Mitochondrial intermembrane. Residues His161, Cys196, Glu198, Cys200, His204, and Met207 each coordinate Cu cation. Glu198 contributes to the Mg(2+) binding site.

Belongs to the cytochrome c oxidase subunit 2 family. As to quaternary structure, component of the cytochrome c oxidase (complex IV, CIV), a multisubunit enzyme composed of a catalytic core of 3 subunits and several supernumerary subunits. The complex exists as a monomer or a dimer and forms supercomplexes (SCs) in the inner mitochondrial membrane with ubiquinol-cytochrome c oxidoreductase (cytochrome b-c1 complex, complex III, CIII). The cofactor is Cu cation.

It is found in the mitochondrion inner membrane. The enzyme catalyses 4 Fe(II)-[cytochrome c] + O2 + 8 H(+)(in) = 4 Fe(III)-[cytochrome c] + 2 H2O + 4 H(+)(out). Component of the cytochrome c oxidase, the last enzyme in the mitochondrial electron transport chain which drives oxidative phosphorylation. The respiratory chain contains 3 multisubunit complexes succinate dehydrogenase (complex II, CII), ubiquinol-cytochrome c oxidoreductase (cytochrome b-c1 complex, complex III, CIII) and cytochrome c oxidase (complex IV, CIV), that cooperate to transfer electrons derived from NADH and succinate to molecular oxygen, creating an electrochemical gradient over the inner membrane that drives transmembrane transport and the ATP synthase. Cytochrome c oxidase is the component of the respiratory chain that catalyzes the reduction of oxygen to water. Electrons originating from reduced cytochrome c in the intermembrane space (IMS) are transferred via the dinuclear copper A center (CU(A)) of subunit 2 and heme A of subunit 1 to the active site in subunit 1, a binuclear center (BNC) formed by heme A3 and copper B (CU(B)). The BNC reduces molecular oxygen to 2 water molecules using 4 electrons from cytochrome c in the IMS and 4 protons from the mitochondrial matrix. The sequence is that of Cytochrome c oxidase subunit 2 (mt:CoII) from Drosophila melanogaster (Fruit fly).